The sequence spans 244 residues: Sperm-egg fusion protein Juno (244 aa).

An N-terminal signal peptide occupies residues 1–19 (MAQWWQILLGLWAVLPTLA). 8 disulfides stabilise this stretch: C27-C55, C47-C95, C56-C99, C79-C166, C86-C137, C126-C200, C130-C180, and C143-C160. The tract at residues 62–81 (WEAHLEEPLLFNFSMMHCGL) is important for interaction with IZUMO1. Residue N73 is glycosylated (N-linked (GlcNAc...) asparagine). A glycan (N-linked (GlcNAc...) asparagine) is linked at N185. Residue G222 is the site of GPI-anchor amidated glycine attachment. Positions 223-244 (SALAPQLSYTLPAFSLCLLFHP) are excised as a propeptide.

The protein belongs to the folate receptor family. Monomer. Interacts with IZUMO1; the interaction is direct. IZUMO1 and IZUMO1R/JUNO form a complex with 1:1 stoichiometry. Interacts with WDR54. In terms of processing, the protein is rapidly cleaved following fertilization, being only weakly detectable in zona-intact fertilized eggs at telophase II and undetectable at the pronuclear stage. Sheding is probably required to block to polyspermy and ensuring egg fusion with a single sperm. As to expression, widely expressed with higher expression in thymus, spleen and lung. Present at the cell surface of unfertilized oocytes, while it is barely detectable 30 to 40 minutes after fertilization (at protein level).

It localises to the cell membrane. Receptor for IZUMO1 present at the cell surface of oocytes (oolemma), which is essential for species-specific gamete recognition and fertilization. The IZUMO1:IZUMO1R/JUNO interaction is a necessary adhesion event between sperm and egg that is required for fertilization but is not sufficient for cell fusion. The ligand-receptor interaction probably does not act as a membrane 'fusogen'. Does not bind folate. In Mus musculus (Mouse), this protein is Sperm-egg fusion protein Juno.